Consider the following 356-residue polypeptide: Red-sensitive opsin-2 (356 aa).

Residues 1-48 (MAEWANAAFAARRRGDETTRDNAFSYTNSNNTRDPFEGPNYHIAPRWV) lie on the Extracellular side of the membrane. Residue N30 is glycosylated (N-linked (GlcNAc...) asparagine). The chain crosses the membrane as a helical span at residues 49–73 (YNVATVWMFFVVVASTFTNGLVLVA). Residues 74–85 (TAKFKKLRHPLN) lie on the Cytoplasmic side of the membrane. A helical transmembrane segment spans residues 86-111 (WILVNLAIADLGETLFASTISVINQV). Topologically, residues 112–125 (FGYFILGHPMCIFE) are extracellular. C122 and C199 are joined by a disulfide. A helical transmembrane segment spans residues 126-145 (GYTVSVCGIAGLWSLTVISW). The Cytoplasmic portion of the chain corresponds to 146 to 164 (ERWVVVCKPFGNVKFDGKW). A helical transmembrane segment spans residues 165–188 (ASAGIIFSWVWAAVWCAPPIFGWS). The Extracellular portion of the chain corresponds to 189 to 214 (RYWPHGLKTSCGPDVFGGNEDPGVQS). A helical transmembrane segment spans residues 215 to 242 (YMLVLMITCCILPLAIIILCYIAVFLAI). Residues 243–264 (HAVAQQQKDSESTQKAEKEVSR) are Cytoplasmic-facing. Residues 265–288 (MVVVMILAFCLCWGPYTAFACFAA) form a helical membrane-spanning segment. At 289–296 (ANPGYAFH) the chain is on the extracellular side. A helical membrane pass occupies residues 297–321 (PLAAAMPAYFAKSATIYNPIIYVFM). At K308 the chain carries N6-(retinylidene)lysine. Residues 322 to 356 (NRQFRVCIMQLFGKKVDDGSEVSTSKTEVSSVAPA) lie on the Cytoplasmic side of the membrane.

It belongs to the G-protein coupled receptor 1 family. Opsin subfamily. Post-translationally, phosphorylated on some or all of the serine and threonine residues present in the C-terminal region.

The protein resides in the membrane. Its function is as follows. Visual pigments are the light-absorbing molecules that mediate vision. They consist of an apoprotein, opsin, covalently linked to cis-retinal. In Danio rerio (Zebrafish), this protein is Red-sensitive opsin-2 (opn1lw2).